A 466-amino-acid polypeptide reads, in one-letter code: Cysteine--tRNA ligase (466 aa).

C29 contacts Zn(2+). The short motif at P31 to N41 is the 'HIGH' region element. The Zn(2+) site is built by C209, H234, and E238. The short motif at K266–S270 is the 'KMSKS' region element. K269 contributes to the ATP binding site.

Belongs to the class-I aminoacyl-tRNA synthetase family. As to quaternary structure, monomer. It depends on Zn(2+) as a cofactor.

It is found in the cytoplasm. The enzyme catalyses tRNA(Cys) + L-cysteine + ATP = L-cysteinyl-tRNA(Cys) + AMP + diphosphate. This is Cysteine--tRNA ligase from Lysinibacillus sphaericus (strain C3-41).